The chain runs to 384 residues: Dual-specificity RNA methyltransferase RlmN (384 aa).

Residue Glu-105 is the Proton acceptor of the active site. The Radical SAM core domain occupies 111 to 350 (EVDRATLCVS…TIVRKTRGDD (240 aa)). Cys-118 and Cys-355 form a disulfide bridge. Residues Cys-125, Cys-129, and Cys-132 each coordinate [4Fe-4S] cluster. Residues 179–180 (GE), Ser-211, 233–235 (SLH), and Asn-312 contribute to the S-adenosyl-L-methionine site. Cys-355 serves as the catalytic S-methylcysteine intermediate.

This sequence belongs to the radical SAM superfamily. RlmN family. The cofactor is [4Fe-4S] cluster.

It localises to the cytoplasm. The catalysed reaction is adenosine(2503) in 23S rRNA + 2 reduced [2Fe-2S]-[ferredoxin] + 2 S-adenosyl-L-methionine = 2-methyladenosine(2503) in 23S rRNA + 5'-deoxyadenosine + L-methionine + 2 oxidized [2Fe-2S]-[ferredoxin] + S-adenosyl-L-homocysteine. It carries out the reaction adenosine(37) in tRNA + 2 reduced [2Fe-2S]-[ferredoxin] + 2 S-adenosyl-L-methionine = 2-methyladenosine(37) in tRNA + 5'-deoxyadenosine + L-methionine + 2 oxidized [2Fe-2S]-[ferredoxin] + S-adenosyl-L-homocysteine. Its function is as follows. Specifically methylates position 2 of adenine 2503 in 23S rRNA and position 2 of adenine 37 in tRNAs. m2A2503 modification seems to play a crucial role in the proofreading step occurring at the peptidyl transferase center and thus would serve to optimize ribosomal fidelity. This Escherichia coli O9:H4 (strain HS) protein is Dual-specificity RNA methyltransferase RlmN.